A 140-amino-acid chain; its full sequence is Translation initiation factor 2 subunit beta (140 aa).

The protein belongs to the eIF-2-beta/eIF-5 family. As to quaternary structure, heterotrimer composed of an alpha, a beta and a gamma chain.

Functionally, eIF-2 functions in the early steps of protein synthesis by forming a ternary complex with GTP and initiator tRNA. The chain is Translation initiation factor 2 subunit beta (eif2b) from Pyrococcus horikoshii (strain ATCC 700860 / DSM 12428 / JCM 9974 / NBRC 100139 / OT-3).